A 61-amino-acid polypeptide reads, in one-letter code: Large ribosomal subunit protein uL30 (61 aa).

This sequence belongs to the universal ribosomal protein uL30 family. As to quaternary structure, part of the 50S ribosomal subunit.

The chain is Large ribosomal subunit protein uL30 from Neisseria gonorrhoeae (strain ATCC 700825 / FA 1090).